The following is a 233-amino-acid chain: Phosphoribosylformylglycinamidine synthase subunit PurQ (233 aa).

A Glutamine amidotransferase type-1 domain is found at 3–233 (SAILVFPGIN…GLVEHLAKAA (231 aa)). The active-site Nucleophile is the C87. Active-site residues include H204 and E206.

Part of the FGAM synthase complex composed of 1 PurL, 1 PurQ and 2 PurS subunits.

It is found in the cytoplasm. The enzyme catalyses N(2)-formyl-N(1)-(5-phospho-beta-D-ribosyl)glycinamide + L-glutamine + ATP + H2O = 2-formamido-N(1)-(5-O-phospho-beta-D-ribosyl)acetamidine + L-glutamate + ADP + phosphate + H(+). The catalysed reaction is L-glutamine + H2O = L-glutamate + NH4(+). Its pathway is purine metabolism; IMP biosynthesis via de novo pathway; 5-amino-1-(5-phospho-D-ribosyl)imidazole from N(2)-formyl-N(1)-(5-phospho-D-ribosyl)glycinamide: step 1/2. Part of the phosphoribosylformylglycinamidine synthase complex involved in the purines biosynthetic pathway. Catalyzes the ATP-dependent conversion of formylglycinamide ribonucleotide (FGAR) and glutamine to yield formylglycinamidine ribonucleotide (FGAM) and glutamate. The FGAM synthase complex is composed of three subunits. PurQ produces an ammonia molecule by converting glutamine to glutamate. PurL transfers the ammonia molecule to FGAR to form FGAM in an ATP-dependent manner. PurS interacts with PurQ and PurL and is thought to assist in the transfer of the ammonia molecule from PurQ to PurL. This chain is Phosphoribosylformylglycinamidine synthase subunit PurQ, found in Rhodopseudomonas palustris (strain BisB18).